Consider the following 120-residue polypeptide: Large ribosomal subunit protein bL17 (120 aa).

Belongs to the bacterial ribosomal protein bL17 family. Part of the 50S ribosomal subunit. Contacts protein L32.

The sequence is that of Large ribosomal subunit protein bL17 from Mycoplasmopsis pulmonis (strain UAB CTIP) (Mycoplasma pulmonis).